The chain runs to 557 residues: Probable asparagine synthetase [glutamine-hydrolyzing] (557 aa).

Cys-2 acts as the For GATase activity in catalysis. The Glutamine amidotransferase type-2 domain maps to 2-188 (CGILAILNSL…PGHYFSSKTK (187 aa)). L-glutamine-binding positions include 50–54 (RLAIV), 75–77 (NGE), and Asp-101. The 250-residue stretch at 217 to 466 (AIKEAFEQAV…LPSSVLWRQK (250 aa)) folds into the Asparagine synthetase domain. ATP contacts are provided by residues Leu-239, Ile-279, and 353 to 354 (SG). The tract at residues 538–557 (WGASQDPSGRAQKVHLSTTE) is disordered.

The enzyme catalyses L-aspartate + L-glutamine + ATP + H2O = L-asparagine + L-glutamate + AMP + diphosphate + H(+). It participates in amino-acid biosynthesis; L-asparagine biosynthesis; L-asparagine from L-aspartate (L-Gln route): step 1/1. In Dictyostelium discoideum (Social amoeba), this protein is Probable asparagine synthetase [glutamine-hydrolyzing] (asns).